Consider the following 137-residue polypeptide: Cell division protein SepF (137 aa).

It belongs to the SepF family. In terms of assembly, homodimer. Interacts with FtsZ.

It is found in the cytoplasm. In terms of biological role, cell division protein that is part of the divisome complex and is recruited early to the Z-ring. Probably stimulates Z-ring formation, perhaps through the cross-linking of FtsZ protofilaments. Its function overlaps with FtsA. The sequence is that of Cell division protein SepF from Carboxydothermus hydrogenoformans (strain ATCC BAA-161 / DSM 6008 / Z-2901).